Here is a 400-residue protein sequence, read N- to C-terminus: Enoyl-[acyl-carrier-protein] reductase [NADH] (400 aa).

NAD(+) contacts are provided by residues 48–53 (GSSSGY), 74–75 (FE), 111–112 (DA), and 139–140 (LA). Tyr-225 is a substrate binding site. The Proton donor role is filled by Tyr-235. Residues Lys-244 and 273–275 (VVT) contribute to the NAD(+) site.

It belongs to the TER reductase family. In terms of assembly, monomer.

The enzyme catalyses a 2,3-saturated acyl-[ACP] + NAD(+) = a (2E)-enoyl-[ACP] + NADH + H(+). Its pathway is lipid metabolism; fatty acid biosynthesis. Its function is as follows. Involved in the final reduction of the elongation cycle of fatty acid synthesis (FAS II). Catalyzes the reduction of a carbon-carbon double bond in an enoyl moiety that is covalently linked to an acyl carrier protein (ACP). This chain is Enoyl-[acyl-carrier-protein] reductase [NADH], found in Aliivibrio fischeri (strain ATCC 700601 / ES114) (Vibrio fischeri).